A 485-amino-acid chain; its full sequence is Regulatory protein ViaA (485 aa).

This sequence belongs to the ViaA family. Homodimer. Interacts with RavA.

The protein localises to the cytoplasm. In terms of biological role, component of the RavA-ViaA chaperone complex, which may act on the membrane to optimize the function of some of the respiratory chains. ViaA stimulates the ATPase activity of RavA. In Proteus mirabilis (strain HI4320), this protein is Regulatory protein ViaA.